The chain runs to 267 residues: Ribosomal RNA small subunit methyltransferase A (267 aa).

Residues Asn18, Leu20, Gly45, Glu66, Asp91, and Asn112 each contribute to the S-adenosyl-L-methionine site.

Belongs to the class I-like SAM-binding methyltransferase superfamily. rRNA adenine N(6)-methyltransferase family. RsmA subfamily.

The protein resides in the cytoplasm. The catalysed reaction is adenosine(1518)/adenosine(1519) in 16S rRNA + 4 S-adenosyl-L-methionine = N(6)-dimethyladenosine(1518)/N(6)-dimethyladenosine(1519) in 16S rRNA + 4 S-adenosyl-L-homocysteine + 4 H(+). Functionally, specifically dimethylates two adjacent adenosines (A1518 and A1519) in the loop of a conserved hairpin near the 3'-end of 16S rRNA in the 30S particle. May play a critical role in biogenesis of 30S subunits. The sequence is that of Ribosomal RNA small subunit methyltransferase A from Shewanella denitrificans (strain OS217 / ATCC BAA-1090 / DSM 15013).